Consider the following 660-residue polypeptide: Acetyl-coenzyme A synthetase (660 aa).

CoA contacts are provided by residues 197 to 200 (RGGK) and Thr-317. ATP contacts are provided by residues 397–399 (GEP), 421–426 (DTFWQT), Asp-512, and Arg-528. Ser-536 serves as a coordination point for CoA. Residue Arg-539 participates in ATP binding. Residues Val-550 and Val-555 each coordinate Mg(2+). Lys-625 carries the post-translational modification N6-acetyllysine.

The protein belongs to the ATP-dependent AMP-binding enzyme family. Requires Mg(2+) as cofactor. In terms of processing, acetylated. Deacetylation by the SIR2-homolog deacetylase activates the enzyme.

It carries out the reaction acetate + ATP + CoA = acetyl-CoA + AMP + diphosphate. Functionally, catalyzes the conversion of acetate into acetyl-CoA (AcCoA), an essential intermediate at the junction of anabolic and catabolic pathways. AcsA undergoes a two-step reaction. In the first half reaction, AcsA combines acetate with ATP to form acetyl-adenylate (AcAMP) intermediate. In the second half reaction, it can then transfer the acetyl group from AcAMP to the sulfhydryl group of CoA, forming the product AcCoA. The protein is Acetyl-coenzyme A synthetase of Cupriavidus pinatubonensis (strain JMP 134 / LMG 1197) (Cupriavidus necator (strain JMP 134)).